A 695-amino-acid chain; its full sequence is Follicle-stimulating hormone receptor (695 aa).

The N-terminal stretch at 1-17 (MALLLVSLLAFLSLGSG) is a signal peptide. 2 disulfide bridges follow: Cys18–Cys25 and Cys23–Cys32. The region spanning 18–46 (CHHRICHCSNRVFLCQESKVTEIPSDLPR) is the LRRNT domain. Residues 18–366 (CHHRICHCSN…EDIMGYNILR (349 aa)) are Extracellular-facing. LRR repeat units follow at residues 49-72 (IELRFVLTKLRVIQKGAFSGFGDL), 73-97 (EKIEISQNDVLEVIEADVFSNLPKL), 98-118 (HEIRIEKANNLLYINPEAFQN), 119-143 (LPNLQYLLISNTGIKHLPDVHKIHS), 144-169 (LQKVLLDIQDNINIHTIERNSFVGLS), 170-192 (FESVILWLNKNGIQEIHNCAFNG), 193-216 (TQLDELNLSDNNNLEELPNDVFHG), 217-240 (ASGPVILDISRTRIHSLPSYGLEN), and 241-259 (LKKLRARSTYNLKKLPTLE). N-linked (GlcNAc...) asparagine glycans are attached at residues Asn191 and Asn199. 4 disulfide bridges follow: Cys275–Cys346, Cys276–Cys292, Cys276–Cys356, and Cys292–Cys338. Residues Asn293 and Asn318 are each glycosylated (N-linked (GlcNAc...) asparagine). Sulfotyrosine is present on Tyr335. Residues 367–387 (VLIWFISILAITGNIIVLVIL) form a helical membrane-spanning segment. The Cytoplasmic segment spans residues 388-398 (TTSQYKLTVPR). A helical membrane pass occupies residues 399–421 (FLMCNLAFADLCIGIYLLLIASV). The Extracellular portion of the chain corresponds to 422–443 (DIHTKSQYHNYAIDWQTGAGCD). Cys442 and Cys517 are oxidised to a cystine. Residues 444-465 (AAGFFTVFASELSVYTLTAITL) form a helical membrane-spanning segment. At 466-485 (ERWHTITHAMQLDCKVQLRH) the chain is on the cytoplasmic side. The chain crosses the membrane as a helical span at residues 486 to 508 (AASVMVMGWIFAFAAALFPIFGI). Topologically, residues 509 to 528 (SSYMKVSICLPMDIDSPLSQ) are extracellular. The helical transmembrane segment at 529 to 550 (LYVMSLLVLNVLAFVVICGCYI) threads the bilayer. Over 551-573 (HIYLTVRNPNIVSSSSDTRIAKR) the chain is Cytoplasmic. A helical membrane pass occupies residues 574-597 (MAMLIFTDFLCMAPISFFAISASL). Over 598-608 (KVPLITVSKAK) the chain is Extracellular. The chain crosses the membrane as a helical span at residues 609 to 630 (ILLVLFHPINSCANPFLYAIFT). Over 631-695 (KNFRRDFFIL…LVPLSHLAQN (65 aa)) the chain is Cytoplasmic.

This sequence belongs to the G-protein coupled receptor 1 family. FSH/LSH/TSH subfamily. In terms of assembly, homotrimer. Functions as a homotrimer binding the FSH hormone heterodimer composed of CGA and FSHB. Interacts with ARRB2. Interacts with APPL2; interaction is independent of follicle stimulating hormone stimulation. Sulfated. In terms of processing, N-glycosylated; indirectly required for FSH-binding, possibly via a conformational change that allows high affinity binding of hormone. As to expression, sertoli cells and ovarian granulosa cells.

The protein localises to the cell membrane. Its function is as follows. G protein-coupled receptor for follitropin, the follicle-stimulating hormone. Through cAMP production activates the downstream PI3K-AKT and ERK1/ERK2 signaling pathways. The protein is Follicle-stimulating hormone receptor (FSHR) of Homo sapiens (Human).